A 502-amino-acid polypeptide reads, in one-letter code: Dynein regulatory complex subunit 2 (502 aa).

Coiled-coil stretches lie at residues 96 to 160 (DSVI…RKAI) and 252 to 285 (EKSSKEIEVQMKKIQRLQEAISALKGKIVAHSRE).

This sequence belongs to the DRC2 family. In terms of assembly, component of the nexin-dynein regulatory complex (N-DRC). Interacts with DRC1.

The protein resides in the cytoplasm. It is found in the cytoskeleton. Its subcellular location is the flagellum basal body. It localises to the cell projection. The protein localises to the cilium. The protein resides in the flagellum. It is found in the flagellum axoneme. Its function is as follows. Component of the nexin-dynein regulatory complex (N-DRC), a key regulator of ciliary/flagellar motility which maintains the alignment and integrity of the distal axoneme and regulates microtubule sliding in motile axonemes. Plays a critical role in the assembly of N-DRC and also stabilizes the assembly of multiple inner dynein arms and radial spokes. Coassembles with DRC1 to form a central scaffold needed for assembly of the N-DRC and its attachment to the outer doublet microtubules. The protein is Dynein regulatory complex subunit 2 (Ccdc65) of Rattus norvegicus (Rat).